A 282-amino-acid polypeptide reads, in one-letter code: Pantothenate synthetase (282 aa).

30-37 (MGYLHEGH) is a binding site for ATP. Histidine 37 functions as the Proton donor in the catalytic mechanism. Position 61 (glutamine 61) interacts with (R)-pantoate. Glutamine 61 serves as a coordination point for beta-alanine. 147 to 150 (GMKD) serves as a coordination point for ATP. Glutamine 153 lines the (R)-pantoate pocket. ATP contacts are provided by residues valine 176 and 184-187 (KSSR).

Belongs to the pantothenate synthetase family. Homodimer.

It localises to the cytoplasm. It carries out the reaction (R)-pantoate + beta-alanine + ATP = (R)-pantothenate + AMP + diphosphate + H(+). Its pathway is cofactor biosynthesis; (R)-pantothenate biosynthesis; (R)-pantothenate from (R)-pantoate and beta-alanine: step 1/1. In terms of biological role, catalyzes the condensation of pantoate with beta-alanine in an ATP-dependent reaction via a pantoyl-adenylate intermediate. The sequence is that of Pantothenate synthetase from Geobacillus sp. (strain WCH70).